We begin with the raw amino-acid sequence, 185 residues long: MQLEVHKRLEEKMTKTLGVLKDDFNSIRAGKANPSMLDRITVDYYGSITPLKQVASVSAPEPRLLIIQPYDPSVINGIEKALMMSDLGLNPSNDGKIIRLNIPQLTEERRKELTKVVKRVAEEGRVALRNGRRDANEQLKKMEKDSELTEDDLKQAQEEVQKITDKFNKQVDEMLVKKELEILEV.

The tract at residues 132-152 is disordered; that stretch reads RRDANEQLKKMEKDSELTEDD.

It belongs to the RRF family.

It is found in the cytoplasm. Functionally, responsible for the release of ribosomes from messenger RNA at the termination of protein biosynthesis. May increase the efficiency of translation by recycling ribosomes from one round of translation to another. The chain is Ribosome-recycling factor from Alkaliphilus metalliredigens (strain QYMF).